The chain runs to 36 residues: Photosystem II reaction center protein M (36 aa).

Residues 5-25 (ILGVIAVALFILIPTSFLLIL) traverse the membrane as a helical segment.

It belongs to the PsbM family. As to quaternary structure, PSII is composed of 1 copy each of membrane proteins PsbA, PsbB, PsbC, PsbD, PsbE, PsbF, PsbH, PsbI, PsbJ, PsbK, PsbL, PsbM, PsbT, PsbY, PsbZ, Psb30/Ycf12, at least 3 peripheral proteins of the oxygen-evolving complex and a large number of cofactors. It forms dimeric complexes.

Its subcellular location is the plastid. It is found in the chloroplast thylakoid membrane. One of the components of the core complex of photosystem II (PSII). PSII is a light-driven water:plastoquinone oxidoreductase that uses light energy to abstract electrons from H(2)O, generating O(2) and a proton gradient subsequently used for ATP formation. It consists of a core antenna complex that captures photons, and an electron transfer chain that converts photonic excitation into a charge separation. This subunit is found at the monomer-monomer interface. The protein is Photosystem II reaction center protein M of Bigelowiella natans (Pedinomonas minutissima).